The chain runs to 744 residues: Vesicle-fusing ATPase (744 aa).

K105 is modified (N6-acetyllysine). At S207 the chain carries Phosphoserine. The residue at position 259 (Y259) is a Phosphotyrosine. ATP is bound by residues 505–510 (NGIIKW) and 545–552 (PHSGKTAL). T550 contacts Mg(2+). Residue S569 is modified to Phosphoserine; by CDK16.

It belongs to the AAA ATPase family. As to quaternary structure, homohexamer. Interacts with GABARAP and GABARAPL2. Interacts with GRIA2. Interacts with PLK2, leading to disrupt the interaction with GRIA2. Interacts with MUSK; may regulate MUSK endocytosis and activity. Interacts with CDK16. Requires Mg(2+) as cofactor. Phosphorylation at Ser-569 interferes with homohexamerization.

The protein resides in the cytoplasm. It catalyses the reaction ATP + H2O = ADP + phosphate + H(+). Functionally, required for vesicle-mediated transport. Catalyzes the fusion of transport vesicles within the Golgi cisternae. Is also required for transport from the endoplasmic reticulum to the Golgi stack. Seems to function as a fusion protein required for the delivery of cargo proteins to all compartments of the Golgi stack GRIA2 leads to influence GRIA2 membrane cycling. In Mus musculus (Mouse), this protein is Vesicle-fusing ATPase (Nsf).